The following is a 62-amino-acid chain: uncharacterized protein (62 aa).

This is an uncharacterized protein from Escherichia coli.